A 666-amino-acid chain; its full sequence is uncharacterized protein (666 aa).

This is an uncharacterized protein from Acanthamoeba polyphaga mimivirus (APMV).